The following is a 937-amino-acid chain: MTDYKDTLNLPQTEFPMRGNLAQREPEMLAHWEAAKRYRKLREVCAGRPRFVLADGPPYANGNIHIGHAVNKILKDIIVKSRTLAGFDAAYIPGWDCHGLPIELQVEKKIGKVGHEVDAAAFRKACREYALEQVDSQRQDFKRLGVLGDWEKPYLTMDYQVEADTVRALGRIIERGHLMKGEKPVHWCVDCGSALAEAEVEYEDKTSQAIDVRFRVEDELDLLRRCALDGDGEGPISVVIWTTTPWTLPANQAVCLHPELSYALVRVGDERLLLAEELVEPAMKRYGFSDARIIGRCQGAALEGALLHHPFLDRQVPVILGEHVTLEAGTGCVHTAPGHGQDDYIVGLRYGLAVDNPVGPDGKFLPGTEFFAGESVHQANGHVIEVLRERGALVLAEKLRHSYPHCWRHKTPIIFRATPQWFISMEQAELREQALKAIQQVQWVPQWGQARIEGMVSGRPDWCISRQRNWGVPIPLFVHLETGRLHPDTPALIEAVAQRIEAQGIEAWFSLDPQELLGKDAAAYQKVSDTLDVWFDSGVTHATVTDKRAELGLPADLYLEGSDQHRGWFQSSLLTSVAMRGTAPYKAVLTHGFTVDAQGQKMSKSKGNVVAPQKVVDTLGADILRLWVAATDYSAEMAVSDEILKRTADAYRRMRNTARFLLANLTGFDPARDMLAPGQMLPLDRWAVDQALKVQQKVTGAYEQYQFHQIYQRVHNFCSVELGSFYLDVIKDRQYTTKADSIARRSAQTAMYHIIEAMVRWLAPILSFTAEEIWQEIPGERNESVLFNTWYQGLFALDASEPMNEAFWATLLDVRQAVNREMEKLRAAKASSLDAEVDLYCEPALAETLEGLGEELRFVLITSYARVHGAASRPDDAVETPLEDGTSLWTRVTRSEHAKCPRCWHHREDIGASSDHPELCGRCVENVAGDGEQRRFA.

Positions 58 to 68 (PYANGNIHIGH) match the 'HIGH' region motif. Residue Glu-560 coordinates L-isoleucyl-5'-AMP. The short motif at 601–605 (KMSKS) is the 'KMSKS' region element. Lys-604 contributes to the ATP binding site. 4 residues coordinate Zn(2+): Cys-900, Cys-903, Cys-920, and Cys-923.

This sequence belongs to the class-I aminoacyl-tRNA synthetase family. IleS type 1 subfamily. Monomer. The cofactor is Zn(2+).

It localises to the cytoplasm. The catalysed reaction is tRNA(Ile) + L-isoleucine + ATP = L-isoleucyl-tRNA(Ile) + AMP + diphosphate. Catalyzes the attachment of isoleucine to tRNA(Ile). As IleRS can inadvertently accommodate and process structurally similar amino acids such as valine, to avoid such errors it has two additional distinct tRNA(Ile)-dependent editing activities. One activity is designated as 'pretransfer' editing and involves the hydrolysis of activated Val-AMP. The other activity is designated 'posttransfer' editing and involves deacylation of mischarged Val-tRNA(Ile). This Thioalkalivibrio sulfidiphilus (strain HL-EbGR7) protein is Isoleucine--tRNA ligase.